We begin with the raw amino-acid sequence, 115 residues long: Large ribosomal subunit protein bL20 (115 aa).

Belongs to the bacterial ribosomal protein bL20 family.

Its function is as follows. Binds directly to 23S ribosomal RNA and is necessary for the in vitro assembly process of the 50S ribosomal subunit. It is not involved in the protein synthesizing functions of that subunit. The polypeptide is Large ribosomal subunit protein bL20 (Synechococcus sp. (strain CC9311)).